A 156-amino-acid chain; its full sequence is Ribosomal RNA large subunit methyltransferase H (156 aa).

S-adenosyl-L-methionine-binding positions include leucine 73, glycine 104, and 123–128; that span reads LSPLTL.

The protein belongs to the RNA methyltransferase RlmH family. Homodimer.

The protein resides in the cytoplasm. The enzyme catalyses pseudouridine(1915) in 23S rRNA + S-adenosyl-L-methionine = N(3)-methylpseudouridine(1915) in 23S rRNA + S-adenosyl-L-homocysteine + H(+). Its function is as follows. Specifically methylates the pseudouridine at position 1915 (m3Psi1915) in 23S rRNA. This chain is Ribosomal RNA large subunit methyltransferase H, found in Photorhabdus laumondii subsp. laumondii (strain DSM 15139 / CIP 105565 / TT01) (Photorhabdus luminescens subsp. laumondii).